The sequence spans 291 residues: Ribosomal RNA small subunit methyltransferase H (291 aa).

Residues 36 to 38, Asp-55, Ala-90, Asp-102, and Gln-109 each bind S-adenosyl-L-methionine; that span reads GGH.

Belongs to the methyltransferase superfamily. RsmH family.

The protein localises to the cytoplasm. It catalyses the reaction cytidine(1402) in 16S rRNA + S-adenosyl-L-methionine = N(4)-methylcytidine(1402) in 16S rRNA + S-adenosyl-L-homocysteine + H(+). Its function is as follows. Specifically methylates the N4 position of cytidine in position 1402 (C1402) of 16S rRNA. The sequence is that of Ribosomal RNA small subunit methyltransferase H from Thermosipho africanus (strain TCF52B).